The chain runs to 392 residues: G2/mitotic-specific cyclin-B2 (392 aa).

This sequence belongs to the cyclin family. Cyclin AB subfamily. In terms of assembly, interacts with the CDK1 protein kinase to form a serine/threonine kinase holoenzyme complex also known as maturation promoting factor (MPF). The cyclin subunit imparts substrate specificity to the complex.

Functionally, essential for the control of the cell cycle at the G2/M (mitosis) transition. This Rana japonica (Japanese reddish frog) protein is G2/mitotic-specific cyclin-B2 (CCNB2).